The chain runs to 139 residues: uncharacterized protein (139 aa).

This is an uncharacterized protein from Burkholderia cepacia (Pseudomonas cepacia).